Consider the following 487-residue polypeptide: Cytochrome P450 monooxygenase pyvB (487 aa).

A helical membrane pass occupies residues 17 to 37; it reads PAYSSVVIGALVVCLVCLVWP. Cysteine 426 contacts heme.

It belongs to the cytochrome P450 family. Heme serves as cofactor.

Its subcellular location is the membrane. Its pathway is secondary metabolite biosynthesis. Its function is as follows. Cytochrome P450 monooxygenase; part of the gene cluster that mediates the biosynthesis of pyranoviolin A, a pyranonigrin analog with a C-3 methoxy group. Initially, the PKS portion of pyvA synthesizes C-10 carbon chain from 5 molecules of malonyl-CoA, which is then condensed with the thiolation (T) domain-bound glycine activated by the adenylation (A) domain. The subsequent chain release by Dieckmann condensation (DKC) could be catalyzed by the TE domain present at the C-terminus of pyvA and/or the alpha/beta hydrolase pyvD, installing the tetramic acid moiety. The FAD-dependent monooxygenase pyvC next epoxidizes one of the olefins of the polyketide part, and the epoxide ring-opening induces the dihydro-gamma-pyrone ring formation. The cytochrome P450 monooxygeanse pyvB would be responsible for the 2 consecutive reactions, in which the dihydro-gamma-pyrone is oxidized to gamma-pyrone and C-7 is hydroxylated to yield pyranonigrin F. Finally, the O-methyltransferase pyvH methylates the C-3 hydroxy group to complete the biosynthesis. The chain is Cytochrome P450 monooxygenase pyvB from Aspergillus violaceofuscus (strain CBS 115571).